The primary structure comprises 104 residues: Large ribosomal subunit protein uL24 (104 aa).

The protein belongs to the universal ribosomal protein uL24 family. Part of the 50S ribosomal subunit.

Functionally, one of two assembly initiator proteins, it binds directly to the 5'-end of the 23S rRNA, where it nucleates assembly of the 50S subunit. Its function is as follows. One of the proteins that surrounds the polypeptide exit tunnel on the outside of the subunit. This Pseudoalteromonas translucida (strain TAC 125) protein is Large ribosomal subunit protein uL24.